Consider the following 208-residue polypeptide: Putative thymidylate kinase (208 aa).

The segment at 12 to 19 is defective ATP-binding; the sequence is GIDGTGTS.

The protein belongs to the thymidylate kinase family.

The enzyme catalyses dTMP + ATP = dTDP + ADP. This is Putative thymidylate kinase (tmk) from Treponema pallidum (strain Nichols).